Consider the following 216-residue polypeptide: Ras-related protein Rab-11A (216 aa).

Gly-2 is modified (N-acetylglycine). The GTP site is built by Ser-20, Gly-21, Val-22, Gly-23, Lys-24, Ser-25, Asn-26, Asn-37, Leu-38, Ser-40, Ser-42, and Thr-43. Ser-25 is a binding site for Mg(2+). The short motif at Phe-36–Glu-47 is the Switch 1 element. Positions 43 and 66 each coordinate Mg(2+). Residues Thr-67–Gly-86 carry the Switch 2 motif. Positions 69, 124, 125, 127, 155, and 156 each coordinate GTP. The disordered stretch occupies residues Asp-183–Pro-208. Residues Cys-212 and Cys-213 are each lipidated (S-geranylgeranyl cysteine). At Cys-213 the chain carries Cysteine methyl ester. Positions Gln-214 to Ile-216 are cleaved as a propeptide — removed in mature form.

The protein belongs to the small GTPase superfamily. Rab family. It depends on Mg(2+) as a cofactor.

It localises to the cell membrane. The protein localises to the endosome membrane. The protein resides in the recycling endosome membrane. Its subcellular location is the cleavage furrow. It is found in the cytoplasmic vesicle. It localises to the phagosome. The protein localises to the cytoplasmic vesicle membrane. The protein resides in the golgi apparatus. Its subcellular location is the trans-Golgi network. It carries out the reaction GTP + H2O = GDP + phosphate + H(+). Its activity is regulated as follows. Regulated by guanine nucleotide exchange factors (GEFs) which promote the exchange of bound GDP for free GTP. Regulated by GTPase activating proteins (GAPs) which increase the GTP hydrolysis activity. Inhibited by GDP dissociation inhibitors (GDIs) which prevent Rab-GDP dissociation. In terms of biological role, the small GTPases Rab are key regulators of intracellular membrane trafficking, from the formation of transport vesicles to their fusion with membranes. Rabs cycle between an inactive GDP-bound form and an active GTP-bound form that is able to recruit to membranes different set of downstream effectors directly responsible for vesicle formation, movement, tethering and fusion. The small Rab GTPase RAB11A regulates endocytic recycling. May also be involved in the regulation of preciliary trafficking and neosynthesized protein export. The polypeptide is Ras-related protein Rab-11A (RAB11A) (Gallus gallus (Chicken)).